A 166-amino-acid polypeptide reads, in one-letter code: Short form salivary protein D7R5 (166 aa).

The first 22 residues, 1-22, serve as a signal peptide directing secretion; it reads MEWRYFVVIALICPLIIVETLA. Intrachain disulfides connect Cys26–Cys58, Cys39–Cys166, and Cys98–Cys117.

It belongs to the PBP/GOBP family.

The protein resides in the secreted. Functionally, in contrast to the related D7 salivary proteins, does not bind biogenic amines such as serotonin, noradrenaline, histamine and adrenaline. It is hypothesized that either D7r5 evolved an as yet unknown function or is becoming a pseudogene. This Anopheles gambiae (African malaria mosquito) protein is Short form salivary protein D7R5.